The primary structure comprises 94 residues: ESAT-6-like protein EsxL (94 aa).

It belongs to the WXG100 family. ESAT-6 subfamily. Strongly interacts with EsxK to form a heterodimeric complex under reducing conditions. The complex is regulated by the redox state of EsxL.

It is found in the secreted. In terms of biological role, induces apoptosis of host cells. Is immunogenic with highly specific seroreactivity towards TB patients' serum. In Mycobacterium tuberculosis (strain ATCC 25618 / H37Rv), this protein is ESAT-6-like protein EsxL.